The primary structure comprises 203 residues: GTP-binding protein rho4 (203 aa).

Residue Gly21–Thr28 coordinates GTP. An Effector region motif is present at residues Tyr43 to Tyr51. Residue Asp70–Gln74 coordinates GTP. Cys200 is modified (cysteine methyl ester). Cys200 carries the S-geranylgeranyl cysteine lipid modification. Positions Val201–Leu203 are cleaved as a propeptide — removed in mature form.

This sequence belongs to the small GTPase superfamily. Rho family.

Its subcellular location is the membrane. In terms of biological role, required for cell separation. Involved in the regulation of the septum degradation during cytokinesis and in the organization of F-actin patches and cytoplasmic microtubules. The polypeptide is GTP-binding protein rho4 (rho4) (Schizosaccharomyces pombe (strain 972 / ATCC 24843) (Fission yeast)).